A 612-amino-acid polypeptide reads, in one-letter code: Chaperone protein DnaK (612 aa).

Thr173 carries the phosphothreonine; by autocatalysis modification. The tract at residues 576–612 (AAKQAQAQQDGGAGAKKADDNVVDAEYEEVNDDKDQK) is disordered. The span at 596–612 (NVVDAEYEEVNDDKDQK) shows a compositional bias: acidic residues.

The protein belongs to the heat shock protein 70 family.

Its function is as follows. Acts as a chaperone. In Bacillus licheniformis (strain ATCC 14580 / DSM 13 / JCM 2505 / CCUG 7422 / NBRC 12200 / NCIMB 9375 / NCTC 10341 / NRRL NRS-1264 / Gibson 46), this protein is Chaperone protein DnaK.